Here is a 61-residue protein sequence, read N- to C-terminus: Defensin BmKDfsin2 (61 aa).

Positions 1–24 (METIVLLFLLALVFCTLEMGMVEA) are cleaved as a signal peptide. 3 disulfides stabilise this stretch: C28/C49, C35/C57, and C39/C59.

The protein belongs to the invertebrate defensin family. Type 2 subfamily. As to expression, highly expressed in non-venom gland (hemolymph) and moderately expressed in venom gland.

The protein localises to the secreted. Antibacterial peptide active against Gram-positive bacteria, but not on Gram-negative bacteria. Also has weak blocking activity on Kv1.1/KCNA1, Kv1.2/KCNA2, Kv1.3/KCNA3, KCa3.1/KCNN4/IK, KCa2.3/KCNN3/SK3 and Kv11.1/KCNH2/ERG1 channels (tested at 1 uM). It inhibits potassium channel current by interacting with the pore region. In Olivierus martensii (Manchurian scorpion), this protein is Defensin BmKDfsin2.